We begin with the raw amino-acid sequence, 398 residues long: Methionine aminopeptidase 1A (398 aa).

At A2 the chain carries N-acetylalanine. A C6H2-type zinc finger spans residues 12-65; sequence TLSCARCEKPAHLQCPKCIDLKLPREQASFCTQECFKAAWSSHKSVHVKAQLSS. Zn(2+)-binding residues include C15, C18, C26, C29, C42, C46, H54, and H58. H214 is a binding site for a protein. 3 residues coordinate Zn(2+): D231, D242, and H305. H312 serves as a coordination point for a protein. 2 residues coordinate Zn(2+): E338 and E369.

It belongs to the peptidase M24A family. Methionine aminopeptidase type 1 subfamily. In terms of assembly, associates with the 60S ribosomal subunit of the 80S translational complex. It depends on Zn(2+) as a cofactor. Requires Co(2+) as cofactor. Mn(2+) serves as cofactor. The cofactor is Fe(2+). In terms of tissue distribution, ubiquitous.

The protein resides in the cytoplasm. The catalysed reaction is Release of N-terminal amino acids, preferentially methionine, from peptides and arylamides.. In terms of biological role, cotranslationally removes the N-terminal methionine from nascent proteins. The N-terminal methionine is often cleaved when the second residue in the primary sequence is small and uncharged (Met-Ala-, Cys, Gly, Pro, Ser, Thr, or Val). This Arabidopsis thaliana (Mouse-ear cress) protein is Methionine aminopeptidase 1A (MAP1A).